Reading from the N-terminus, the 95-residue chain is Sec-independent protein translocase protein TatA (95 aa).

A helical membrane pass occupies residues 1–21; sequence MGSMSVWHWVIVAVVVMLLFG. Residues 42 to 95 form a disordered region; the sequence is GMADDETQPNTATSVPPVGPNDPVRTLPHQGAPGTAPQPPHVQPHVSAGDHKAV.

It belongs to the TatA/E family. In terms of assembly, the Tat system comprises two distinct complexes: a TatABC complex, containing multiple copies of TatA, TatB and TatC subunits, and a separate TatA complex, containing only TatA subunits. Substrates initially bind to the TatABC complex, which probably triggers association of the separate TatA complex to form the active translocon.

It localises to the cell inner membrane. In terms of biological role, part of the twin-arginine translocation (Tat) system that transports large folded proteins containing a characteristic twin-arginine motif in their signal peptide across membranes. TatA could form the protein-conducting channel of the Tat system. In Methylorubrum extorquens (strain CM4 / NCIMB 13688) (Methylobacterium extorquens), this protein is Sec-independent protein translocase protein TatA.